The chain runs to 115 residues: Xenovulene A biosynthesis cluster protein asL2 (115 aa).

Functionally, part of the gene cluster that mediates the biosynthesis of xenovulene A, an unusual meroterpenoid that has potent inhibitory effects on the human gamma-aminobutyrate A (GABAA) benzodiazepine receptor. The first step of xenovulene A biosynthesis is the biosynthesis of 3-methylorcinaldehyde performed by the non-reducing polyketide synthase aspks1. The salicylate hydroxylase asL1 then catalyzes the oxidative dearomatization of 3-methylorcinaldehyde to yield a dearomatized hydroxycyclohexadione. The 2-oxoglutarate-dependent dioxygenase asL3 further catalyzes the oxidative ring expansion to provide the first tropolone metabolite. The cytochrome P450 monooxygenase asR2 allows the synthesis of tropolone hemiacetal. In parallel, a previously unrecognised class of terpene cyclase, asR6, produces alpha-humulene from farnesylpyrophosphate (FPP). The putative Diels-Alderase asR5 probably catalyzes the formation of the tropolone-humulene skeleton by linking humulene and the polyketide moiety. Oxidative-ring contractions catalyzed by asL4 and asL6 then processively remove carbon atoms from the polyketide to yield xenovulene A. This chain is Xenovulene A biosynthesis cluster protein asL2, found in Sarocladium schorii (Acremonium strictum (strain IMI 501407)).